The sequence spans 1481 residues: Cystic fibrosis transmembrane conductance regulator (1481 aa).

The Cytoplasmic segment spans residues methionine 1 to phenylalanine 77. Residues phenylalanine 78–glutamine 98 traverse the membrane as a helical segment. The 285-residue stretch at phenylalanine 81–leucine 365 folds into the ABC transmembrane type-1 1 domain. Residues proline 99–tyrosine 122 are Extracellular-facing. A helical transmembrane segment spans residues leucine 123–histidine 146. Topologically, residues histidine 147 to leucine 195 are cytoplasmic. The helical transmembrane segment at alanine 196–tryptophan 216 threads the bilayer. Topologically, residues glutamate 217–serine 222 are extracellular. Residues alanine 223–methionine 243 form a helical membrane-spanning segment. The Cytoplasmic portion of the chain corresponds to methionine 244 to lysine 298. Residues alanine 299–phenylalanine 319 traverse the membrane as a helical segment. The Extracellular portion of the chain corresponds to leucine 320–threonine 339. The helical transmembrane segment at isoleucine 340–valine 358 threads the bilayer. At glutamine 359 to serine 858 the chain is on the cytoplasmic side. ATP contacts are provided by residues tryptophan 401, serine 434, glycine 458–threonine 465, and glutamine 493. Positions asparagine 423 to glycine 646 constitute an ABC transporter 1 domain. Cysteine 524 is lipidated: S-palmitoyl cysteine. Residues serine 549 and serine 660 each carry the phosphoserine modification. A disordered R region region spans residues serine 654–glutamate 831. Serine 670 bears the Phosphoserine; by PKA mark. Residue serine 686 is modified to Phosphoserine. A Glycyl lysine isopeptide (Lys-Gly) (interchain with G-Cter in ubiquitin) cross-link involves residue lysine 688. 2 positions are modified to phosphoserine: serine 700 and serine 712. Threonine 717 is subject to Phosphothreonine. A phosphoserine mark is found at serine 737, serine 768, serine 790, serine 795, and serine 813. Residues leucine 859 to valine 879 form a helical membrane-spanning segment. The 297-residue stretch at leucine 859–serine 1155 folds into the ABC transmembrane type-1 2 domain. The Extracellular portion of the chain corresponds to valine 880 to isoleucine 918. 3 N-linked (GlcNAc...) asparagine glycosylation sites follow: asparagine 894, asparagine 900, and asparagine 909. Residues tyrosine 919–histidine 939 traverse the membrane as a discontinuously helical segment. Residues threonine 940 to threonine 990 are Cytoplasmic-facing. A helical membrane pass occupies residues isoleucine 991–leucine 1011. At glutamine 1012–proline 1013 the chain is on the extracellular side. A helical membrane pass occupies residues tyrosine 1014–leucine 1034. Topologically, residues histidine 1035–threonine 1095 are cytoplasmic. The helical transmembrane segment at leucine 1096–phenylalanine 1116 threads the bilayer. The Extracellular portion of the chain corresponds to isoleucine 1117–glycine 1130. A helical transmembrane segment spans residues isoleucine 1131–isoleucine 1151. Topologically, residues aspartate 1152–leucine 1481 are cytoplasmic. The region spanning valine 1199 to serine 1444 is the ABC transporter 2 domain. ATP contacts are provided by residues tyrosine 1220 and glycine 1245–serine 1252. Positions arginine 1387–leucine 1481 are interaction with GORASP2. The S-palmitoyl cysteine moiety is linked to residue cysteine 1396. Phosphoserine occurs at positions 1445 and 1457. Residues lysine 1449–leucine 1481 are disordered. Residues leucine 1450 to arginine 1462 show a composition bias toward basic residues. The span at glutamate 1471–leucine 1481 shows a compositional bias: acidic residues. The PDZ-binding signature appears at threonine 1479 to leucine 1481.

The protein belongs to the ABC transporter superfamily. ABCC family. CFTR transporter (TC 3.A.1.202) subfamily. In terms of assembly, monomer; does not require oligomerization for channel activity. May form oligomers in the membrane. Interacts with SLC26A3, SLC26A6 and NHERF1. Interacts with SHANK2. Interacts with MYO6. Interacts (via C-terminus) with GOPC (via PDZ domain); this promotes CFTR internalization and thereby decreases channel activity. Interacts with SLC4A7 through NHERF1. Found in a complex with MYO5B and RAB11A. Interacts with ANO1. Interacts with SLC26A8. Interacts with AHCYL1; the interaction increases CFTR activity. Interacts with CSE1L. The core-glycosylated form interacts with GORASP2 (via PDZ GRASP-type 1 domain) in respone to ER stress. Interacts with MARCHF2; the interaction leads to CFTR ubiqtuitination and degradation. Interacts with ADGRG2. Post-translationally, N-glycosylated. Phosphorylated; cAMP treatment promotes phosphorylation and activates the channel. Dephosphorylation decreases the ATPase activity (in vitro). Phosphorylation at PKA sites activates the channel. Phosphorylation at PKC sites enhances the response to phosphorylation by PKA. Phosphorylated by AMPK; this inhibits channel activity. In terms of processing, ubiquitinated, leading to its degradation in the lysosome. Deubiquitination by USP10 in early endosomes enhances its endocytic recycling to the cell membrane. Ubiquitinated by RNF185 during ER stress. Ubiquitinated by MARCHF2. In terms of tissue distribution, isoform 1 is expressed in the pancreas. Isoform 2 is specifically expressed in the ventricle.

Its subcellular location is the apical cell membrane. The protein localises to the early endosome membrane. It localises to the cell membrane. The protein resides in the recycling endosome membrane. It is found in the endoplasmic reticulum membrane. Its subcellular location is the nucleus. It catalyses the reaction ATP + H2O + closed Cl(-) channel = ADP + phosphate + open Cl(-) channel.. It carries out the reaction chloride(in) = chloride(out). The catalysed reaction is hydrogencarbonate(in) = hydrogencarbonate(out). The enzyme catalyses ATP + H2O = ADP + phosphate + H(+). In terms of biological role, epithelial ion channel that plays an important role in the regulation of epithelial ion and water transport and fluid homeostasis. Mediates the transport of chloride ions across the cell membrane. Possesses an intrinsic ATPase activity and utilizes ATP to gate its channel; the passive flow of anions through the channel is gated by cycles of ATP binding and hydrolysis by the ATP-binding domains. The ion channel is also permeable to HCO(3)(-); selectivity depends on the extracellular chloride concentration. Exerts its function also by modulating the activity of other ion channels and transporters. Contributes to the regulation of the pH and the ion content of the epithelial fluid layer. Modulates the activity of the epithelial sodium channel (ENaC) complex, in part by regulating the cell surface expression of the ENaC complex. May regulate bicarbonate secretion and salvage in epithelial cells by regulating the transporter SLC4A7. Can inhibit the chloride channel activity of ANO1. Plays a role in the chloride and bicarbonate homeostasis during sperm epididymal maturation and capacitation. This Oryctolagus cuniculus (Rabbit) protein is Cystic fibrosis transmembrane conductance regulator.